The primary structure comprises 535 residues: Berberine bridge enzyme-like 27 (535 aa).

The first 22 residues, 1–22, serve as a signal peptide directing secretion; it reads MEILRFLLSLFIYFLLLNLSLS. Residues N18 and N66 are each glycosylated (N-linked (GlcNAc...) asparagine). Cysteines 40 and 100 form a disulfide. Positions 78 to 253 constitute an FAD-binding PCMH-type domain; it reads ETPKPVSIIT…LSWKIRLLDV (176 aa). At H115 the chain carries Pros-8alpha-FAD histidine. N146, N215, and N439 each carry an N-linked (GlcNAc...) asparagine glycan.

Belongs to the oxygen-dependent FAD-linked oxidoreductase family. FAD is required as a cofactor. Accumulates in cell walls of etiolated hypocotyls.

It localises to the secreted. Its subcellular location is the cell wall. This is Berberine bridge enzyme-like 27 from Arabidopsis thaliana (Mouse-ear cress).